Here is a 93-residue protein sequence, read N- to C-terminus: Large ribosomal subunit protein uL23cz/uL23cy (93 aa).

Belongs to the universal ribosomal protein uL23 family. As to quaternary structure, part of the 50S ribosomal subunit.

It localises to the plastid. The protein resides in the chloroplast. In terms of biological role, binds to 23S rRNA. The chain is Large ribosomal subunit protein uL23cz/uL23cy (rpl23-A) from Oryza nivara (Indian wild rice).